The chain runs to 154 residues: Iron-sulfur cluster assembly enzyme IscU (154 aa).

The protein belongs to the NifU family. Component of the mitochondrial core iron-sulfur cluster (ISC) assembly complex at least composed of the cystein desulfurase Nfs1, the scaffold protein IscU, the accessory protein bcn92/Isd11/Lyrm4, and probably fh/frataxin. Interacts with Nfs1. Fe(2+) serves as cofactor. The cofactor is [2Fe-2S] cluster.

The protein operates within cofactor biosynthesis; iron-sulfur cluster biosynthesis. Scaffold protein for the de novo synthesis of iron-sulfur (Fe-S) clusters within mitochondria, which is required for maturation of both mitochondrial and cytoplasmic [2Fe-2S] and [4Fe-4S] proteins. Component of the mitochondrial core iron-sulfur cluster (ISC) assembly complex; regulates its activity. This chain is Iron-sulfur cluster assembly enzyme IscU, found in Drosophila melanogaster (Fruit fly).